We begin with the raw amino-acid sequence, 190 residues long: MAFIAKSFYDLSAISLDGEKVDFNTFRGRAVLIENVASLUGTTTRDFTQLNELQCRFPRRLVVLGFPCNQFGHQENCQNEEILNSLKYVRPGGGYQPTFTLVQKCEVNGQNEHPVFAYLKDKLPYPHDDPFSLMTDPKFIIWSPVCRSDVAWNFEKFLIGPEGEPFRRYSRTFPTINIEPDIKRLLKVAI.

Sec-40 is a catalytic residue. A non-standard amino acid (selenocysteine) is located at residue Sec-40.

This sequence belongs to the glutathione peroxidase family. As to quaternary structure, homotetramer.

It localises to the cytoplasm. The protein resides in the cytosol. It catalyses the reaction 2 glutathione + H2O2 = glutathione disulfide + 2 H2O. It carries out the reaction a hydroperoxy polyunsaturated fatty acid + 2 glutathione = a hydroxy polyunsaturated fatty acid + glutathione disulfide + H2O. The enzyme catalyses tert-butyl hydroperoxide + 2 glutathione = tert-butanol + glutathione disulfide + H2O. The catalysed reaction is cumene hydroperoxide + 2 glutathione = 2-phenylpropan-2-ol + glutathione disulfide + H2O. It catalyses the reaction (13S)-hydroperoxy-(9Z,11E)-octadecadienoate + 2 glutathione = (13S)-hydroxy-(9Z,11E)-octadecadienoate + glutathione disulfide + H2O. It carries out the reaction (5S)-hydroperoxy-(6E,8Z,11Z,14Z)-eicosatetraenoate + 2 glutathione = (5S)-hydroxy-(6E,8Z,11Z,14Z)-eicosatetraenoate + glutathione disulfide + H2O. The enzyme catalyses (12R)-hydroperoxy-(5Z,8Z,10E,14Z)-eicosatetraenoate + 2 glutathione = (12R)-hydroxy-(5Z,8Z,10E,14Z)-eicosatetraenoate + glutathione disulfide + H2O. The catalysed reaction is (15S)-hydroperoxy-(5Z,8Z,11Z,13E)-eicosatetraenoate + 2 glutathione = (15S)-hydroxy-(5Z,8Z,11Z,13E)-eicosatetraenoate + glutathione disulfide + H2O. Functionally, catalyzes the reduction of hydroperoxides in a glutathione-dependent manner thus regulating cellular redox homeostasis. Can reduce small soluble hydroperoxides such as H2O2, cumene hydroperoxide and tert-butyl hydroperoxide, as well as several fatty acid-derived hydroperoxides. Cannot reduce phosphatidycholine hydroperoxide. The sequence is that of Glutathione peroxidase 2 (GPX2) from Sapajus apella (Brown-capped capuchin).